Consider the following 147-residue polypeptide: Large ribosomal subunit protein uL13 (147 aa).

This sequence belongs to the universal ribosomal protein uL13 family. In terms of assembly, part of the 50S ribosomal subunit.

This protein is one of the early assembly proteins of the 50S ribosomal subunit, although it is not seen to bind rRNA by itself. It is important during the early stages of 50S assembly. The sequence is that of Large ribosomal subunit protein uL13 from Ligilactobacillus salivarius (strain UCC118) (Lactobacillus salivarius).